Here is a 360-residue protein sequence, read N- to C-terminus: Isocitrate dehydrogenase [NAD] subunit 1, mitochondrial (360 aa).

Residues 1–11 (MLNRTIAKRTL) constitute a mitochondrion transit peptide. Positions 109, 140, and 228 each coordinate substrate. Aspartate 228 contacts Mg(2+).

This sequence belongs to the isocitrate and isopropylmalate dehydrogenases family. Octamer of two non-identical subunits IDH1 and IDH2. Requires Mg(2+) as cofactor. Mn(2+) serves as cofactor.

It localises to the mitochondrion. It catalyses the reaction D-threo-isocitrate + NAD(+) = 2-oxoglutarate + CO2 + NADH. Allosterically regulated by several compounds including AMP, NAD(+), and citrate. Performs an essential role in the oxidative function of the citric acid cycle. Also binds RNA; specifically to the 5'-untranslated leaders of mitochondrial mRNAs. The sequence is that of Isocitrate dehydrogenase [NAD] subunit 1, mitochondrial (IDH1) from Saccharomyces cerevisiae (strain ATCC 204508 / S288c) (Baker's yeast).